Reading from the N-terminus, the 180-residue chain is Large ribosomal subunit protein uL6 (180 aa).

This sequence belongs to the universal ribosomal protein uL6 family. Part of the 50S ribosomal subunit.

Its function is as follows. This protein binds to the 23S rRNA, and is important in its secondary structure. It is located near the subunit interface in the base of the L7/L12 stalk, and near the tRNA binding site of the peptidyltransferase center. This chain is Large ribosomal subunit protein uL6, found in Cutibacterium acnes (strain DSM 16379 / KPA171202) (Propionibacterium acnes).